Reading from the N-terminus, the 490-residue chain is Glutamate--tRNA ligase (490 aa).

The short motif at 10 to 20 (PSPTGRMHVGN) is the 'HIGH' region element. Zn(2+) is bound by residues C109, C111, C140, and H142. The 'KMSKS' region signature appears at 257–261 (KLSKR). An ATP-binding site is contributed by K260.

Belongs to the class-I aminoacyl-tRNA synthetase family. Glutamate--tRNA ligase type 1 subfamily. Monomer. It depends on Zn(2+) as a cofactor.

It is found in the cytoplasm. It catalyses the reaction tRNA(Glu) + L-glutamate + ATP = L-glutamyl-tRNA(Glu) + AMP + diphosphate. Catalyzes the attachment of glutamate to tRNA(Glu) in a two-step reaction: glutamate is first activated by ATP to form Glu-AMP and then transferred to the acceptor end of tRNA(Glu). This is Glutamate--tRNA ligase from Lachnoclostridium phytofermentans (strain ATCC 700394 / DSM 18823 / ISDg) (Clostridium phytofermentans).